The following is a 688-amino-acid chain: Protein STE12 (688 aa).

The residue at position 29 (Thr-29) is a Phosphothreonine. A DNA-binding region spans residues 57–167; it reads NQIIRRYYLN…SVAHDKLFAD (111 aa). Disordered stretches follow at residues 177-199, 211-239, and 285-305; these read SLNQ…YDSS, HLDS…KDNE, and LTEE…DEED. 2 positions are modified to phosphoserine: Ser-214 and Ser-226. The span at 217-226 shows a compositional bias: polar residues; the sequence is PSSTTKSDNS. 2 stretches are compositionally biased toward basic and acidic residues: residues 230 to 239 and 288 to 302; these read LESENFKDNE and ETPH…KGRD. Thr-289 is modified (phosphothreonine). Ser-400 carries the post-translational modification Phosphoserine. 2 disordered regions span residues 587–610 and 630–688; these read GMKS…AKIS and TKAR…PDAT. Polar residues predominate over residues 588-604; it reads MKSSQGNVPTGNKQSVG. 2 stretches are compositionally biased toward basic and acidic residues: residues 640–649 and 672–688; these read DSAHPDKNKE and LEVD…PDAT.

The protein belongs to the STE12 transcription factor family. In terms of assembly, interacts with mating-type protein ALPHA1. Phosphorylated by the STE7, STE11 and STE20 kinases.

The protein resides in the nucleus. Functionally, binds to the DNA sequence mediating pheromone induction (called the pheromone response element = PRE) which is found in the upstream control region of several a-, alpha- and haploid-specific genes. Involved in mating of haploids and in pseudohyphae formation in diploids. The polypeptide is Protein STE12 (STE12) (Saccharomyces cerevisiae (strain ATCC 204508 / S288c) (Baker's yeast)).